The sequence spans 326 residues: Putative ubiquitin-conjugating enzyme E2 38 (326 aa).

The UBC core domain maps to 54–214 (NWVKKVQDEW…VFLLSLKTMV (161 aa)). Cys140 (glycyl thioester intermediate) is an active-site residue. A disordered region spans residues 297–326 (LAEKPKPPVNNANTENQSKKKTRKRSRSSR). Residues 315–326 (KKKTRKRSRSSR) show a composition bias toward basic residues.

This sequence belongs to the ubiquitin-conjugating enzyme family.

The enzyme catalyses S-ubiquitinyl-[E1 ubiquitin-activating enzyme]-L-cysteine + [E2 ubiquitin-conjugating enzyme]-L-cysteine = [E1 ubiquitin-activating enzyme]-L-cysteine + S-ubiquitinyl-[E2 ubiquitin-conjugating enzyme]-L-cysteine.. It functions in the pathway protein modification; protein ubiquitination. In terms of biological role, accepts the ubiquitin from the E1 complex and catalyzes its covalent attachment to other proteins. The sequence is that of Putative ubiquitin-conjugating enzyme E2 38 (UBC38) from Arabidopsis thaliana (Mouse-ear cress).